The following is a 421-amino-acid chain: Imidazolonepropionase (421 aa).

Fe(3+) is bound by residues His81 and His83. His81 and His83 together coordinate Zn(2+). 3 residues coordinate 4-imidazolone-5-propanoate: Arg90, Tyr153, and His186. Tyr153 lines the N-formimidoyl-L-glutamate pocket. His251 provides a ligand contact to Fe(3+). A Zn(2+)-binding site is contributed by His251. Glu254 serves as a coordination point for 4-imidazolone-5-propanoate. Residue Asp326 coordinates Fe(3+). Position 326 (Asp326) interacts with Zn(2+). Residues Asn328 and Gly330 each coordinate N-formimidoyl-L-glutamate. Ser331 is a binding site for 4-imidazolone-5-propanoate.

It belongs to the metallo-dependent hydrolases superfamily. HutI family. Zn(2+) is required as a cofactor. Fe(3+) serves as cofactor.

It localises to the cytoplasm. The catalysed reaction is 4-imidazolone-5-propanoate + H2O = N-formimidoyl-L-glutamate. The protein operates within amino-acid degradation; L-histidine degradation into L-glutamate; N-formimidoyl-L-glutamate from L-histidine: step 3/3. Catalyzes the hydrolytic cleavage of the carbon-nitrogen bond in imidazolone-5-propanoate to yield N-formimidoyl-L-glutamate. It is the third step in the universal histidine degradation pathway. In Streptococcus pyogenes serotype M6 (strain ATCC BAA-946 / MGAS10394), this protein is Imidazolonepropionase.